A 367-amino-acid polypeptide reads, in one-letter code: Queuine tRNA-ribosyltransferase (367 aa).

The Proton acceptor role is filled by Asp-92. Substrate-binding positions include 92-96, Asp-146, Gln-188, and Gly-215; that span reads DSGGF. The tract at residues 246–252 is RNA binding; sequence GVGTPKD. The Nucleophile role is filled by Asp-265. Residues Cys-303, Cys-305, Cys-308, and His-334 each contribute to the Zn(2+) site.

It belongs to the queuine tRNA-ribosyltransferase family. Homodimer. Within each dimer, one monomer is responsible for RNA recognition and catalysis, while the other monomer binds to the replacement base PreQ1. The cofactor is Zn(2+).

It catalyses the reaction 7-aminomethyl-7-carbaguanine + guanosine(34) in tRNA = 7-aminomethyl-7-carbaguanosine(34) in tRNA + guanine. It participates in tRNA modification; tRNA-queuosine biosynthesis. Functionally, catalyzes the base-exchange of a guanine (G) residue with the queuine precursor 7-aminomethyl-7-deazaguanine (PreQ1) at position 34 (anticodon wobble position) in tRNAs with GU(N) anticodons (tRNA-Asp, -Asn, -His and -Tyr). Catalysis occurs through a double-displacement mechanism. The nucleophile active site attacks the C1' of nucleotide 34 to detach the guanine base from the RNA, forming a covalent enzyme-RNA intermediate. The proton acceptor active site deprotonates the incoming PreQ1, allowing a nucleophilic attack on the C1' of the ribose to form the product. After dissociation, two additional enzymatic reactions on the tRNA convert PreQ1 to queuine (Q), resulting in the hypermodified nucleoside queuosine (7-(((4,5-cis-dihydroxy-2-cyclopenten-1-yl)amino)methyl)-7-deazaguanosine). In Francisella tularensis subsp. holarctica (strain FTNF002-00 / FTA), this protein is Queuine tRNA-ribosyltransferase.